A 383-amino-acid polypeptide reads, in one-letter code: tRNA(Met) cytidine acetate ligase (383 aa).

ATP contacts are provided by residues 7–20 (ISEYNPFHNGHLYQ), G102, N160, and 181–182 (RI).

It belongs to the TmcAL family.

It is found in the cytoplasm. The enzyme catalyses cytidine(34) in elongator tRNA(Met) + acetate + ATP = N(4)-acetylcytidine(34) in elongator tRNA(Met) + AMP + diphosphate. In terms of biological role, catalyzes the formation of N(4)-acetylcytidine (ac(4)C) at the wobble position of elongator tRNA(Met), using acetate and ATP as substrates. First activates an acetate ion to form acetyladenylate (Ac-AMP) and then transfers the acetyl group to tRNA to form ac(4)C34. This chain is tRNA(Met) cytidine acetate ligase, found in Exiguobacterium sibiricum (strain DSM 17290 / CCUG 55495 / CIP 109462 / JCM 13490 / 255-15).